Consider the following 407-residue polypeptide: Multifunctional CCA protein (407 aa).

ATP contacts are provided by glycine 8 and arginine 11. Residues glycine 8 and arginine 11 each coordinate CTP. Residues aspartate 21 and aspartate 23 each coordinate Mg(2+). The ATP site is built by arginine 91, arginine 137, and arginine 140. Arginine 91, arginine 137, and arginine 140 together coordinate CTP. Residues threonine 226–leucine 327 form the HD domain.

It belongs to the tRNA nucleotidyltransferase/poly(A) polymerase family. Bacterial CCA-adding enzyme type 1 subfamily. In terms of assembly, monomer. Can also form homodimers and oligomers. Requires Mg(2+) as cofactor. The cofactor is Ni(2+).

It carries out the reaction a tRNA precursor + 2 CTP + ATP = a tRNA with a 3' CCA end + 3 diphosphate. It catalyses the reaction a tRNA with a 3' CCA end + 2 CTP + ATP = a tRNA with a 3' CCACCA end + 3 diphosphate. In terms of biological role, catalyzes the addition and repair of the essential 3'-terminal CCA sequence in tRNAs without using a nucleic acid template. Adds these three nucleotides in the order of C, C, and A to the tRNA nucleotide-73, using CTP and ATP as substrates and producing inorganic pyrophosphate. tRNA 3'-terminal CCA addition is required both for tRNA processing and repair. Also involved in tRNA surveillance by mediating tandem CCA addition to generate a CCACCA at the 3' terminus of unstable tRNAs. While stable tRNAs receive only 3'-terminal CCA, unstable tRNAs are marked with CCACCA and rapidly degraded. The protein is Multifunctional CCA protein of Aromatoleum aromaticum (strain DSM 19018 / LMG 30748 / EbN1) (Azoarcus sp. (strain EbN1)).